Here is a 492-residue protein sequence, read N- to C-terminus: Cytochrome P450 monooxygenase rdc4 (492 aa).

Heme is bound at residue C435.

Belongs to the cytochrome P450 family. Requires heme as cofactor.

The protein operates within secondary metabolite biosynthesis. Functionally, cytochrome P450 monooxygenase; part of the gene cluster that mediates the biosynthesis of radicicol, a resorcylic acid lactone (RAL) that irreversibly inhibits the HSP90 molecular chaperone, an important target for cancer chemotherapy. The radicicol cluster encodes only two apparent post-PKS enzymes, a cytochrome P450 monooxygenase (rdc4) and a non-heme halogenase (rdc2) that could introduce the epoxide and the chlorine, respectively. If this cluster includes all the genes required for radicicol biosynthesis, the remaining structural features of radicicol are presumably generated by the PKSs rdc1 and rdc5. The C-2' ketone could arise if the R-PKS rdc5 and NR-PKS rdc1 each carry out four iterations, in contrast to the five iteration-three iteration split for the hypothemycin PKSs. The origin of the cis 5',6' double bond is not known. The radicicol R-PKS rdc5 ER domain may catalyze either double bond isomerization or reduction in the third iteration. The protein is Cytochrome P450 monooxygenase rdc4 of Metacordyceps chlamydosporia (Nematophagous fungus).